Reading from the N-terminus, the 124-residue chain is Large ribosomal subunit protein bL12 (124 aa).

The protein belongs to the bacterial ribosomal protein bL12 family. In terms of assembly, homodimer. Part of the ribosomal stalk of the 50S ribosomal subunit. Forms a multimeric L10(L12)X complex, where L10 forms an elongated spine to which 2 to 4 L12 dimers bind in a sequential fashion. Binds GTP-bound translation factors.

Functionally, forms part of the ribosomal stalk which helps the ribosome interact with GTP-bound translation factors. Is thus essential for accurate translation. This chain is Large ribosomal subunit protein bL12, found in Christiangramia forsetii (strain DSM 17595 / CGMCC 1.15422 / KT0803) (Gramella forsetii).